Reading from the N-terminus, the 853-residue chain is Thrombospondin type-1 domain-containing protein 1 (853 aa).

The first 24 residues, 1–24 (MKPMLKDFSNLLLVVLCDYVLGEA), serve as a signal peptide directing secretion. Topologically, residues 25–414 (EYLLLREPGH…QPQGPVKSNN (390 aa)) are extracellular. 7 N-linked (GlcNAc...) asparagine glycosylation sites follow: Asn-39, Asn-53, Asn-58, Asn-69, Asn-80, Asn-135, and Asn-304. Residues 341–394 (IETWGLWQPWSQCSATCGDGVRERRRVCLTSFPSRPGCPGMSLEASLCSLEECA) form the TSP type-1 domain. 3 cysteine pairs are disulfide-bonded: Cys-353-Cys-388, Cys-357-Cys-393, and Cys-368-Cys-378. A helical transmembrane segment spans residues 415-435 (IVTVTGISLCLFIIIATVLIT). Over 436 to 853 (LWRRFGRPAK…STLSVEKLVI (418 aa)) the chain is Cytoplasmic. Disordered regions lie at residues 445 to 518 (KCST…ESFQ), 624 to 650 (TLIR…RNAH), 668 to 702 (ERSM…QSRG), and 714 to 800 (QEAS…RKDK). Ser-464 bears the Phosphoserine mark. Polar residues predominate over residues 671–686 (MSTLTPRQAPAYSTRT). Over residues 687–697 (RTCEQAEDRFR) the composition is skewed to basic and acidic residues. A compositionally biased stretch (polar residues) spans 767-795 (SHKSVSRKQSSPTSPKDSYQRVSPLSPSQ).

In terms of assembly, part of a complex composed of THSD1, PTK2/FAK1, TLN1 and VCL. Interacts with TLN1.

It localises to the endosome membrane. Its subcellular location is the cell junction. It is found in the focal adhesion. Is a positive regulator of nascent focal adhesion assembly, involved in the modulation of endothelial cell attachment to the extracellular matrix. The polypeptide is Thrombospondin type-1 domain-containing protein 1 (THSD1) (Pongo abelii (Sumatran orangutan)).